A 478-amino-acid chain; its full sequence is Lipoprotein lipase (478 aa).

A signal peptide spans 1–27 (MESKVLLLLALSVWLQSLTVSRGGLVA). Residues 35–56 (KDFRDIESKFALRTPEDTAEDT) are interaction with GPIHBP1. A disulfide bond links Cys57 and Cys70. Asn73 carries N-linked (GlcNAc...) asparagine glycosylation. 3'-nitrotyrosine is present on Tyr124. The active-site Nucleophile is the Ser162. Catalysis depends on Asp186, which acts as the Charge relay system. Tyr194 is modified (3'-nitrotyrosine). 4 residues coordinate Ca(2+): Ala197, Arg200, Ser202, and Asp205. Residues Cys246 and Cys269 are joined by a disulfide bond. The segment at 246-269 (CNIGEALRVIAERGLGDVDQLVKC) is essential for determining substrate specificity. His271 acts as the Charge relay system in catalysis. 2 cysteine pairs are disulfide-bonded: Cys294-Cys313 and Cys305-Cys308. One can recognise a PLAT domain in the interval 344 to 467 (FHYQVKIHFS…KGKSPVIFVK (124 aa)). Tyr346 carries the 3'-nitrotyrosine modification. N-linked (GlcNAc...) asparagine glycosylation is present at Asn389. An important for interaction with lipoprotein particles region spans residues 420–424 (WSNWW). An important for heparin binding region spans residues 433–437 (KIRVK). An interaction with GPIHBP1 region spans residues 446–470 (IFCSREKMSYLQKGKSPVIFVKCHD). A disulfide bridge connects residues Cys448 and Cys468.

This sequence belongs to the AB hydrolase superfamily. Lipase family. In terms of assembly, homodimer. Interacts with GPIHBP1 with 1:1 stoichiometry. Interacts with APOC2; the interaction activates LPL activity in the presence of lipids. Interaction with heparan sulfate proteoglycans is required to protect LPL against loss of activity. Associates with lipoprotein particles in blood plasma. Interacts with LMF1 and SEL1L; interaction with SEL1L is required to prevent aggregation of newly synthesized LPL in the endoplasmic reticulum (ER), and for normal export of LPL from the ER to the extracellular space. Interacts with SORL1; SORL1 acts as a sorting receptor, promoting LPL localization to endosomes and later to lysosomes, leading to degradation of newly synthesized LPL. Post-translationally, tyrosine nitration after lipopolysaccharide (LPS) challenge down-regulates the lipase activity.

Its subcellular location is the cell membrane. It localises to the secreted. The protein resides in the extracellular space. It is found in the extracellular matrix. It catalyses the reaction a triacylglycerol + H2O = a diacylglycerol + a fatty acid + H(+). The enzyme catalyses a 1,2-diacyl-sn-glycero-3-phosphocholine + H2O = a 2-acyl-sn-glycero-3-phosphocholine + a fatty acid + H(+). The catalysed reaction is 1,2,3-tri-(9Z-octadecenoyl)-glycerol + H2O = di-(9Z)-octadecenoylglycerol + (9Z)-octadecenoate + H(+). It carries out the reaction 1,2-di-(9Z-octadecenoyl)-sn-glycero-3-phosphocholine + H2O = (9Z-octadecenoyl)-sn-glycero-3-phosphocholine + (9Z)-octadecenoate + H(+). It catalyses the reaction 1,2,3-tributanoylglycerol + H2O = dibutanoylglycerol + butanoate + H(+). The enzyme catalyses 1,2-dihexadecanoyl-sn-glycero-3-phosphocholine + H2O = hexadecanoyl-sn-glycero-3-phosphocholine + hexadecanoate + H(+). With respect to regulation, the apolipoprotein APOC2 acts as a coactivator of LPL activity. Ca(2+) binding promotes protein stability and formation of the active homodimer. Interaction with GPIHBP1 protects LPL against inactivation by ANGPTL4. Functionally, key enzyme in triglyceride metabolism. Catalyzes the hydrolysis of triglycerides from circulating chylomicrons and very low density lipoproteins (VLDL), and thereby plays an important role in lipid clearance from the blood stream, lipid utilization and storage. Although it has both phospholipase and triglyceride lipase activities it is primarily a triglyceride lipase with low but detectable phospholipase activity. Mediates margination of triglyceride-rich lipoprotein particles in capillaries. Recruited to its site of action on the luminal surface of vascular endothelium by binding to GPIHBP1 and cell surface heparan sulfate proteoglycans. The polypeptide is Lipoprotein lipase (LPL) (Ovis aries (Sheep)).